A 432-amino-acid polypeptide reads, in one-letter code: Enolase (432 aa).

Residue Gln-167 coordinates (2R)-2-phosphoglycerate. Glu-209 acts as the Proton donor in catalysis. Mg(2+) contacts are provided by Asp-246, Glu-290, and Asp-317. Positions 342, 371, 372, and 393 each coordinate (2R)-2-phosphoglycerate. The Proton acceptor role is filled by Lys-342.

Belongs to the enolase family. In terms of assembly, component of the RNA degradosome, a multiprotein complex involved in RNA processing and mRNA degradation. Requires Mg(2+) as cofactor.

Its subcellular location is the cytoplasm. The protein localises to the secreted. The protein resides in the cell surface. It carries out the reaction (2R)-2-phosphoglycerate = phosphoenolpyruvate + H2O. The protein operates within carbohydrate degradation; glycolysis; pyruvate from D-glyceraldehyde 3-phosphate: step 4/5. In terms of biological role, catalyzes the reversible conversion of 2-phosphoglycerate (2-PG) into phosphoenolpyruvate (PEP). It is essential for the degradation of carbohydrates via glycolysis. The protein is Enolase of Klebsiella pneumoniae subsp. pneumoniae (strain ATCC 700721 / MGH 78578).